Consider the following 404-residue polypeptide: Corticosteroid-binding globulin (404 aa).

Positions 1-30 (MAWSTRTMMSLALYTCFLWLLTSGLKTVQS) are cleaved as a signal peptide. N-linked (GlcNAc...) asparagine glycans are attached at residues Asn-95 and Asn-225. Gln-253 provides a ligand contact to cortisol. Asn-259 carries an N-linked (GlcNAc...) asparagine glycan. Glu-285 contacts cortisol. The N-linked (GlcNAc...) asparagine glycan is linked to Asn-326. Residue Trp-392 coordinates cortisol.

This sequence belongs to the serpin family. As to expression, expressed by the liver; secreted in plasma.

Its subcellular location is the secreted. In terms of biological role, major transport protein for glucocorticoids and progestins in the blood of almost all vertebrate species. This is Corticosteroid-binding globulin (SERPINA6) from Mesocricetus auratus (Golden hamster).